Here is a 214-residue protein sequence, read N- to C-terminus: uncharacterized protein (214 aa).

The first 17 residues, 1–17 (MLKKIIILFLGVFVLSG), serve as a signal peptide directing secretion. C18 carries N-palmitoyl cysteine lipidation. C18 carries S-diacylglycerol cysteine lipidation. The span at 64-77 (DNLDDPEDDDDDYD) shows a compositional bias: acidic residues. 3 disordered regions span residues 64-83 (DNLDDPEDDDDDYDNPLRGE), 106-138 (YKAESGESSDDDDMTLSKANKKVRKDNTDKERK), and 166-197 (TANQNYVPPVSNYEPVAPVKNNKPYNNNSKVK). The stretch at 120–162 (TLSKANKKVRKDNTDKERKMQEELDQIKAMLRETKRDISKYTC) forms a coiled coil.

The protein resides in the cell membrane. This is an uncharacterized protein from Rickettsia bellii (strain RML369-C).